A 504-amino-acid chain; its full sequence is Maturase K (504 aa).

This sequence belongs to the intron maturase 2 family. MatK subfamily.

It is found in the plastid. The protein localises to the chloroplast. Usually encoded in the trnK tRNA gene intron. Probably assists in splicing its own and other chloroplast group II introns. The protein is Maturase K of Mentzelia laevicaulis (Blazing star).